The primary structure comprises 160 residues: Transcription antitermination protein NusB (160 aa).

Belongs to the NusB family.

In terms of biological role, involved in transcription antitermination. Required for transcription of ribosomal RNA (rRNA) genes. Binds specifically to the boxA antiterminator sequence of the ribosomal RNA (rrn) operons. In Salinibacter ruber (strain DSM 13855 / M31), this protein is Transcription antitermination protein NusB.